The following is a 347-amino-acid chain: Phenylalanine--tRNA ligase alpha subunit (347 aa).

Residue glutamate 265 coordinates Mg(2+).

Belongs to the class-II aminoacyl-tRNA synthetase family. Phe-tRNA synthetase alpha subunit type 1 subfamily. Tetramer of two alpha and two beta subunits. Mg(2+) is required as a cofactor.

The protein resides in the cytoplasm. It carries out the reaction tRNA(Phe) + L-phenylalanine + ATP = L-phenylalanyl-tRNA(Phe) + AMP + diphosphate + H(+). The protein is Phenylalanine--tRNA ligase alpha subunit of Wolbachia pipientis subsp. Culex pipiens (strain wPip).